The chain runs to 226 residues: MGIIKFDKVTQVFGDLYVLRNITVQLTERRIAVIGANGSGKSTFVRLINGLQLPSHGFVSVDGLDTKNDAKAIKHKVGFVFQNPDNQIVLPLVEEDLSFGLKNLKLSKEEVKERVDEILQRYDLQNFRNHAVHLLSGGQKQLVAISGVVAMKPDYIIFDEPTTLLDLRNKRLITQVIEELSQTAIVVSHDLEFIRNFDRVLVFDKGEIVVDDIPLVAIKEYIRRMS.

Residues 4–222 form the ABC transporter domain; the sequence is IKFDKVTQVF…IPLVAIKEYI (219 aa). 35 to 42 is an ATP binding site; it reads GANGSGKS.

It belongs to the ABC transporter superfamily.

The protein resides in the cell inner membrane. Probably part of an ABC transporter complex. Responsible for energy coupling to the transport system. This Bartonella henselae (strain ATCC 49882 / DSM 28221 / CCUG 30454 / Houston 1) (Rochalimaea henselae) protein is Putative ABC transporter ATP-binding protein BH02760.